The sequence spans 184 residues: Photosystem I assembly protein Ycf4 (184 aa).

2 helical membrane passes run 22 to 42 (FFWA…GTSS) and 57 to 77 (IIFF…LFIS).

This sequence belongs to the Ycf4 family.

It localises to the plastid. It is found in the chloroplast thylakoid membrane. Functionally, seems to be required for the assembly of the photosystem I complex. The chain is Photosystem I assembly protein Ycf4 from Aethionema grandiflorum (Persian stone-cress).